Here is a 685-residue protein sequence, read N- to C-terminus: Serine/threonine-protein kinase PLK2 (685 aa).

The tract at residues 24–71 is disordered; sequence KGCGADSKKKRPPQPPEESQPPQSQAQVPPAAAHHHHHHSHSGPEISR. A compositionally biased stretch (low complexity) spans 43 to 55; that stretch reads QPPQSQAQVPPAA. The 253-residue stretch at 82–334 folds into the Protein kinase domain; it reads YCRGKVLGKG…LDDIIRHDFF (253 aa). Residues 88-96 and lysine 111 contribute to the ATP site; that span reads LGKGGFAKC. Aspartate 205 (proton acceptor) is an active-site residue. Threonine 239 carries the post-translational modification Phosphothreonine. The interval 406–433 is disordered; the sequence is SITQQPSKHRTDEELQPPTTTVARSGTP. 2 consecutive POLO box domains span residues 503–581 and 601–685; these read WVTK…YMEE and YLLQ…QRCN.

This sequence belongs to the protein kinase superfamily. Ser/Thr protein kinase family. CDC5/Polo subfamily. In terms of assembly, interacts with NSF; causing NSF dissociation from GRIA2. Interacts with CIB1. In terms of processing, catalytic activity is enhanced by phosphorylation of Thr-239.

It is found in the cytoplasm. The protein localises to the cytoskeleton. Its subcellular location is the microtubule organizing center. The protein resides in the centrosome. It localises to the centriole. It is found in the cell projection. The protein localises to the dendrite. It catalyses the reaction L-seryl-[protein] + ATP = O-phospho-L-seryl-[protein] + ADP + H(+). The enzyme catalyses L-threonyl-[protein] + ATP = O-phospho-L-threonyl-[protein] + ADP + H(+). With respect to regulation, activated by phosphorylation of Thr-239. Once activated, activity is stimulated by binding target proteins. Functionally, tumor suppressor serine/threonine-protein kinase involved in synaptic plasticity, centriole duplication and G1/S phase transition. Polo-like kinases act by binding and phosphorylating proteins that are already phosphorylated on a specific motif recognized by the POLO box domains. Phosphorylates CPAP, NPM1, RAPGEF2, RASGRF1, SNCA, SIPA1L1 and SYNGAP1. Plays a key role in synaptic plasticity and memory by regulating the Ras and Rap protein signaling: required for overactivity-dependent spine remodeling by phosphorylating the Ras activator RASGRF1 and the Rap inhibitor SIPA1L1 leading to their degradation by the proteasome. Conversely, phosphorylates the Rap activator RAPGEF2 and the Ras inhibitor SYNGAP1, promoting their activity. Also regulates synaptic plasticity independently of kinase activity, via its interaction with NSF that disrupts the interaction between NSF and the GRIA2 subunit of AMPARs, leading to a rapid rundown of AMPAR-mediated current that occludes long term depression. Required for procentriole formation and centriole duplication by phosphorylating CPAP and NPM1, respectively. Its induction by p53/TP53 suggests that it may participate in the mitotic checkpoint following stress. This Pongo abelii (Sumatran orangutan) protein is Serine/threonine-protein kinase PLK2 (PLK2).